Here is a 400-residue protein sequence, read N- to C-terminus: MSAVDIQATRDAGQQLQVRLAQRLDLGLTLSVLALLGLGLVMVASASIGIADRNLGDPLYFLKRQAAYVVLGLAAASLAYRIRLAYWEASAGLLLGFAYFLLILVLVPGVGVTVNGSTRWLSLGLFNLQVSEVAKLLFTLYLAGYLTRHGRAVREQFAGFLRPMLLLSGAALLLLMEPDFGAAVVLMAIGLALLFLAGAKLWQFALLVGTVAAALAMLAITTPYRMARLTAFLDPWNDPFNSGFQLTQSLIAIGSGSWFGVGLGASVQKLFYLPEAHNDFLFAVLAEELGLVGITVVVLLYGWFLWRSFGIGRAAEQAGQLFGAYLAYGVGVWVSLQAFINMGVNMGLLPTKGLTLPLMSYGGSSMLMTCAAVGLLLRVHRETVESGPLRVGRVTGGRGA.

11 consecutive transmembrane segments (helical) span residues 30–50, 65–84, 92–112, 123–143, 157–177, 179–199, 201–221, 247–267, 280–300, 321–341, and 356–376; these read LSVL…SIGI, QAAY…RIRL, GLLL…GVGV, LGLF…LYLA, FAGF…LLME, DFGA…LAGA, LWQF…LAIT, TQSL…GASV, FLFA…VVLL, LFGA…AFIN, and LPLM…VGLL.

Belongs to the SEDS family. FtsW subfamily.

It is found in the cell inner membrane. The enzyme catalyses [GlcNAc-(1-&gt;4)-Mur2Ac(oyl-L-Ala-gamma-D-Glu-L-Lys-D-Ala-D-Ala)](n)-di-trans,octa-cis-undecaprenyl diphosphate + beta-D-GlcNAc-(1-&gt;4)-Mur2Ac(oyl-L-Ala-gamma-D-Glu-L-Lys-D-Ala-D-Ala)-di-trans,octa-cis-undecaprenyl diphosphate = [GlcNAc-(1-&gt;4)-Mur2Ac(oyl-L-Ala-gamma-D-Glu-L-Lys-D-Ala-D-Ala)](n+1)-di-trans,octa-cis-undecaprenyl diphosphate + di-trans,octa-cis-undecaprenyl diphosphate + H(+). It functions in the pathway cell wall biogenesis; peptidoglycan biosynthesis. In terms of biological role, peptidoglycan polymerase that is essential for cell division. This Thioalkalivibrio sulfidiphilus (strain HL-EbGR7) protein is Probable peptidoglycan glycosyltransferase FtsW.